A 513-amino-acid chain; its full sequence is Maturase K (513 aa).

This sequence belongs to the intron maturase 2 family. MatK subfamily.

Its subcellular location is the plastid. It localises to the chloroplast. Functionally, usually encoded in the trnK tRNA gene intron. Probably assists in splicing its own and other chloroplast group II introns. This Arundo donax (Giant reed) protein is Maturase K.